The sequence spans 371 residues: Hsc70-interacting protein (371 aa).

Residues 38 to 80 (MGGKVPPATHKAKSEENTKEEKRDKTTEENIKTEELSSEESDL) are disordered. Residues 49–72 (AKSEENTKEEKRDKTTEENIKTEE) are compositionally biased toward basic and acidic residues. 3 TPR repeats span residues 113-146 (ANEKKGAAIEALNDGELQKAIDLFTDAIKLNPRL), 147-180 (AILYAKRASVFVKLQKPNAAIRDCDRAIEINPDS), and 181-214 (AQPYKWRGKAHRLLGHWEEAAHDLALACKLDYDE). Positions 255-271 (KAREEHERAQREEEARR) are enriched in basic and acidic residues. The disordered stretch occupies residues 255–296 (KAREEHERAQREEEARRQSGSQYGSFPGGFPGGMPGNFPGGM). Over residues 280-296 (FPGGFPGGMPGNFPGGM) the composition is skewed to gly residues. Residues 321–360 (DPEVLAAMQDPEVMVAFQDVAQNPSNMSKYQSNPKVMNLI) form the STI1 domain. Serine 348 is modified (phosphoserine; by GRK5). Residues lysine 355 and lysine 362 each carry the N6-acetyllysine modification.

It belongs to the FAM10 family. In terms of assembly, homotetramer. Interacts with HSC70 as well as DNAJ homologs and HSP90. Interacts (via the C-terminus 302- 318 AA) with GRK5.

It localises to the cytoplasm. Functionally, one HIP oligomer binds the ATPase domains of at least two HSC70 molecules dependent on activation of the HSC70 ATPase by HSP40. Stabilizes the ADP state of HSC70 that has a high affinity for substrate protein. Through its own chaperone activity, it may contribute to the interaction of HSC70 with various target proteins. In Mus musculus (Mouse), this protein is Hsc70-interacting protein (St13).